The following is a 58-amino-acid chain: uncharacterized protein (58 aa).

Residues 18–38 (WLMIVLLFCSTGMVFLATILE) form a helical membrane-spanning segment.

Its subcellular location is the membrane. This is an uncharacterized protein from Saccharomyces cerevisiae (strain ATCC 204508 / S288c) (Baker's yeast).